A 115-amino-acid chain; its full sequence is MSNIIKQIEQEQMKQDVPSFRPGDSVEVKVWVVEGTKKRLQAFEGVVIAIRNRGLHSAFTVRKISNGEGVERVFQTHSPVIDSISVKRRGAVRKAKLYYLRERTGKSARIKERLG.

Belongs to the bacterial ribosomal protein bL19 family.

This protein is located at the 30S-50S ribosomal subunit interface and may play a role in the structure and function of the aminoacyl-tRNA binding site. This chain is Large ribosomal subunit protein bL19, found in Enterobacter sp. (strain 638).